Here is a 312-residue protein sequence, read N- to C-terminus: Ribosomal RNA small subunit methyltransferase H (312 aa).

Residues 34–36 (AGH), aspartate 54, phenylalanine 81, aspartate 102, and glutamine 109 contribute to the S-adenosyl-L-methionine site.

This sequence belongs to the methyltransferase superfamily. RsmH family.

It localises to the cytoplasm. The catalysed reaction is cytidine(1402) in 16S rRNA + S-adenosyl-L-methionine = N(4)-methylcytidine(1402) in 16S rRNA + S-adenosyl-L-homocysteine + H(+). Specifically methylates the N4 position of cytidine in position 1402 (C1402) of 16S rRNA. This is Ribosomal RNA small subunit methyltransferase H from Geotalea daltonii (strain DSM 22248 / JCM 15807 / FRC-32) (Geobacter daltonii).